The following is a 3291-amino-acid chain: Protocadherin-16 (3291 aa).

An N-terminal signal peptide occupies residues 1–35 (MQKELSVALSCPGMKSLRTLLPLLVLLGATVPGSW). The Extracellular portion of the chain corresponds to 36-2933 (GQAGSLDLQI…PDLNLLLVGA (2898 aa)). Cadherin domains follow at residues 37 to 137 (QAGS…APAF), 138 to 249 (PQAR…APAF), 250 to 356 (NQSR…QPSM), 369 to 466 (VSEA…APAF), 476 to 572 (LPEV…EPQF), 573 to 679 (QRTF…PPQF), 680 to 784 (YPRE…PPIF), 785 to 888 (EQLQ…SPAF), 889 to 994 (PAPE…APRF), 995 to 1105 (DSPT…EPTF), 1100 to 1205 (SEEP…SPTF), 1218 to 1317 (IQVP…SPDL), 1326 to 1429 (VPVV…APTF), 1430 to 1539 (ARDP…APVF), 1539 to 1642 (FASP…APAF), 1643 to 1744 (PQQE…TPTF), 1745 to 1848 (GNTH…APVF), 1849 to 1953 (PVPS…APAF), 1976 to 2061 (LATL…GPRF), 2062 to 2164 (PRTS…APRF), 2165 to 2270 (LRPH…RPTI), 2270 to 2369 (IPQP…VPTF), 2370 to 2475 (SQSL…APSF), 2476 to 2595 (TLPH…PPVF), 2596 to 2699 (TRAS…GPAF), 2700 to 2806 (PLSL…DPVF), and 2807 to 2926 (LAPS…APDL). N-linked (GlcNAc...) asparagine glycosylation occurs at asparagine 396. Residue asparagine 2354 is glycosylated (N-linked (GlcNAc...) asparagine). The disordered stretch occupies residues 2867–2886 (SRAPGSGTTTSGGGGRTRRE). The helical transmembrane segment at 2934 to 2954 (VAASLGVVVVLALAALVLGLV) threads the bilayer. At 2955–3291 (RARSRKAEAA…EPPDDTELRI (337 aa)) the chain is on the cytoplasmic side. The interval 2978 to 3033 (SLQKLGREPPSPPPSEHLYHQTLPSYGGPGAGGPYPRGGSLDPSHSSGRGSAEAAE) is disordered. The segment covering 3004 to 3013 (GGPGAGGPYP) has biased composition (gly residues). Serine 3048 is subject to Phosphoserine. Disordered regions lie at residues 3051–3081 (SSLA…APDT) and 3226–3291 (ASHR…ELRI). Positions 3237–3259 (SLSSAAMSPSFSPSLSPLAARSP) are enriched in low complexity. The span at 3270-3279 (PSASALSTES) shows a compositional bias: polar residues.

Heterophilic interaction with FAT4; this interaction affects their respective protein levels. In terms of tissue distribution, expressed in the epicardium and atrioventricular sulcus (at protein level).

The protein localises to the cell membrane. In terms of biological role, calcium-dependent cell-adhesion protein. Mediates functions in neuroprogenitor cell proliferation and differentiation. In the heart, has a critical role for proper morphogenesis of the mitral valve, acting in the regulation of cell migration involved in valve formation. This Mus musculus (Mouse) protein is Protocadherin-16 (Dchs1).